Consider the following 77-residue polypeptide: DNA-directed RNA polymerase subunit epsilon (77 aa).

Belongs to the RNA polymerase subunit epsilon family. As to quaternary structure, RNAP is composed of a core of 2 alpha, a beta and a beta' subunit. The core is associated with a delta subunit, and at least one of epsilon or omega. When a sigma factor is associated with the core the holoenzyme is formed, which can initiate transcription.

It carries out the reaction RNA(n) + a ribonucleoside 5'-triphosphate = RNA(n+1) + diphosphate. Functionally, a non-essential component of RNA polymerase (RNAP). The chain is DNA-directed RNA polymerase subunit epsilon from Streptococcus pneumoniae (strain P1031).